Reading from the N-terminus, the 188-residue chain is dCTP deaminase (188 aa).

DCTP is bound by residues K111–R116, T135–E137, Q156, Y170, and Q180. E137 acts as the Proton donor/acceptor in catalysis.

This sequence belongs to the dCTP deaminase family. Homotrimer.

The enzyme catalyses dCTP + H2O + H(+) = dUTP + NH4(+). It participates in pyrimidine metabolism; dUMP biosynthesis; dUMP from dCTP (dUTP route): step 1/2. Catalyzes the deamination of dCTP to dUTP. The sequence is that of dCTP deaminase from Cupriavidus taiwanensis (strain DSM 17343 / BCRC 17206 / CCUG 44338 / CIP 107171 / LMG 19424 / R1) (Ralstonia taiwanensis (strain LMG 19424)).